The chain runs to 865 residues: MHSAKNEKCNACGGYRFSVNDGFKYCDRCGALFENFEELEEEEGGLQQTVGQGKVKVRKNDDQKRVRNNAAPVNLPKAQVMREALEKRSDFLQQQAIKGEELELPHDATPDYLYRLALRLFSFTQILAKSGHILVHELNFESRVQENILATFQKYLAHCQVAFCHSEQCGNDEHLRFVAVMENLRYEQEEREEKQRKRMAKRGKGVNALSKSAAAWTLLTQGNITEHLDIASDEDGDQDAQGGQQLDDLTLETTQNPDESIRVNDTTMGFVRKVTTALSKEALRRASQLILNLEMLVAILHSALMSSGYQTILTSDVVRWIREDRFRISRRSIRLIRQSQPERMKQGEVVKPTIVDYAEPFLRFPLYEIMRTCTIFHQSLKLASSMAPQSFESMSARLVDNLNLPSDILSRMLILESIIPCDVSPQLLKQVDVDMGYNCGQLAAMSPNVYYSGFLTSFGRKERGTQDADFCDEVLLSPDAKLIAYLLLTLRLTFQLDNAQCALQDDQYFDVDSWIHQLEMRIKCWQGHNMSLVMRSSSHVPEMVVDPPFGTNYLFHQEKGAPQVSCRRRQAGFQKCIPTEMSFNSTSTLPTVFDVRHMGLLTERCQMEALISPVKFQRTVLGNEIERDPLTFENVDRQSKNTFFKHFSAFKTTESCDTFEEYFPCAKNYLLFKRPDWIQNCTARQTHFNPVTGPIRFYLSNQSCDDLLGTAATSFSRRFQFLLDALSLIIGEDKKAVYAAFVMLEMHLTSSERIQSIRDDLLTSSPITLKCQKFRNSTHHIPRKYGVISEVPIDRIENLRYFRLSRQFFEHEEMPTTINMELIDYRNQEIRDSVTETEVQRAQNRIMKLCYEFEQFFGILAVKFW.

The segment at 1-33 (MHSAKNEKCNACGGYRFSVNDGFKYCDRCGALF) adopts an RRN7-type zinc-finger fold. Zn(2+)-binding residues include Cys-9, Cys-12, Cys-26, and Cys-29. The segment at 35–99 (NFEELEEEEG…DFLQQQAIKG (65 aa)) is B-reader. Residues 100 to 111 (EELELPHDATPD) are B-linker. The tract at residues 112 to 348 (YLYRLALRLF…SQPERMKQGE (237 aa)) is N-terminal cyclin fold. The disordered stretch occupies residues 233 to 261 (DEDGDQDAQGGQQLDDLTLETTQNPDESI). Residues 239 to 248 (DAQGGQQLDD) are compositionally biased toward low complexity. The segment covering 252–261 (ETTQNPDESI) has biased composition (polar residues). The interval 349–496 (VVKPTIVDYA…LLTLRLTFQL (148 aa)) is C-terminal cyclin fold.

It belongs to the RRN7/TAF1B family.

Its subcellular location is the nucleus. The protein resides in the nucleolus. In terms of biological role, component of RNA polymerase I core factor complex that acts as a GTF2B/TFIIB-like factor and plays a key role in multiple steps during transcription initiation such as pre-initiation complex (PIC) assembly and postpolymerase recruitment events in polymerase I (Pol I) transcription. Binds rDNA promoters and plays a role in Pol I recruitment. The polypeptide is TATA box-binding protein-associated factor RNA polymerase I subunit B (Caenorhabditis elegans).